A 98-amino-acid polypeptide reads, in one-letter code: UPF0213 protein LACR_2011 (98 aa).

A GIY-YIG domain is found at Asn-2–Leu-79.

The protein belongs to the UPF0213 family.

The chain is UPF0213 protein LACR_2011 from Lactococcus lactis subsp. cremoris (strain SK11).